The chain runs to 96 residues: Co-chaperonin GroES (96 aa).

This sequence belongs to the GroES chaperonin family. In terms of assembly, heptamer of 7 subunits arranged in a ring. Interacts with the chaperonin GroEL.

Its subcellular location is the cytoplasm. Functionally, together with the chaperonin GroEL, plays an essential role in assisting protein folding. The GroEL-GroES system forms a nano-cage that allows encapsulation of the non-native substrate proteins and provides a physical environment optimized to promote and accelerate protein folding. GroES binds to the apical surface of the GroEL ring, thereby capping the opening of the GroEL channel. The polypeptide is Co-chaperonin GroES (Buchnera aphidicola subsp. Acyrthosiphon pisum (strain 5A)).